Consider the following 432-residue polypeptide: Glycosyltransferase 6 (432 aa).

Topologically, residues Met-1–Gly-18 are cytoplasmic. Residues Val-19–Phe-39 traverse the membrane as a helical; Signal-anchor for type II membrane protein segment. The Lumenal segment spans residues Ser-40–Trp-432. Residue Asn-315 is glycosylated (N-linked (GlcNAc...) asparagine).

Belongs to the glycosyltransferase 34 family.

Its subcellular location is the golgi apparatus membrane. Functionally, probable glycosyltransferase that may be involved in the biosynthesis of xyloglucan. This chain is Glycosyltransferase 6 (GT6), found in Arabidopsis thaliana (Mouse-ear cress).